We begin with the raw amino-acid sequence, 705 residues long: Probable glutamate carboxypeptidase AMP1 (705 aa).

Residues 1–24 (MSQPLTTRPTVTGISIIPFRQPPP) lie on the Cytoplasmic side of the membrane. The helical; Signal-anchor for type II membrane protein transmembrane segment at 25–42 (LCSFLFVIVLFVATFYTL) threads the bilayer. Residues 43-705 (HHPDAVTPPL…ASKALKGGFT (663 aa)) are Extracellular-facing. N74, N137, and N322 each carry an N-linked (GlcNAc...) asparagine glycan. The tract at residues 255 to 548 (GVVGGEKLSL…GIWGLLGILL (294 aa)) is catalytic. The Zn(2+) site is built by H356 and D366. Catalysis depends on E403, which acts as the Nucleophile. The Zn(2+) site is built by E404, D432, and H514. N676 carries N-linked (GlcNAc...) asparagine glycosylation.

It belongs to the peptidase M28 family. M28B subfamily. Zn(2+) serves as cofactor. In terms of tissue distribution, expressed in all plant parts. Highest levels in the bolt stem, inflorescence, root and silique. Low level in leaves.

It localises to the endoplasmic reticulum membrane. It catalyses the reaction Release of an unsubstituted, C-terminal glutamyl residue, typically from Ac-Asp-Glu or folylpoly-gamma-glutamates.. In terms of biological role, may modulate the level of one or more small signaling molecules that have a role in regulating meristem function. May play a role in balancing and restricting the meristem-promoting activity of auxin signaling. Involved in ethylene and giberellin (GA) signaling pathways or in a parallel pathway controlling cell and hypocotyl elongation and cellular organization. Involved in abscisic acid (ABA) signaling pathway. Plays a negative role in ABA-mediated seed germination and seedling development. Acts in association with LAMP1 to suppress ectopic stem cell niche formation in the shoot apical meristem (SAM) independently of cytokinin signaling pathway. Modulates responses to ABA, oxidative stress and abotic stress. Acts as a negative regulator of the ABA signaling pathway to modulate freezing and drought stress responses. Mediates carbon and amino acid metabolism. May be involved in the acquisition and/or maintenance of seed dormancy. Involved in the regulation of response to heat shock and plant defense. This is Probable glutamate carboxypeptidase AMP1 from Arabidopsis thaliana (Mouse-ear cress).